Consider the following 400-residue polypeptide: Queuine tRNA-ribosyltransferase catalytic subunit (400 aa).

The active-site Proton acceptor is Asp-89. Substrate contacts are provided by residues Asp-89 to Phe-93, Asp-143, Gln-185, and Gly-212. The segment at Gly-243 to Asp-249 is RNA binding. Asp-262 acts as the Nucleophile in catalysis. Residues Thr-267 to Arg-271 are RNA binding; important for wobble base 34 recognition. Cys-301, Cys-303, Cys-306, and His-331 together coordinate Zn(2+).

The protein belongs to the queuine tRNA-ribosyltransferase family. As to quaternary structure, heterodimer of a catalytic subunit and an accessory subunit. Zn(2+) is required as a cofactor.

Its subcellular location is the cytoplasm. The catalysed reaction is guanosine(34) in tRNA + queuine = queuosine(34) in tRNA + guanine. In terms of biological role, catalytic subunit of the queuine tRNA-ribosyltransferase (TGT) that catalyzes the base-exchange of a guanine (G) residue with queuine (Q) at position 34 (anticodon wobble position) in tRNAs with GU(N) anticodons (tRNA-Asp, -Asn, -His and -Tyr), resulting in the hypermodified nucleoside queuosine (7-(((4,5-cis-dihydroxy-2-cyclopenten-1-yl)amino)methyl)-7-deazaguanosine). Catalysis occurs through a double-displacement mechanism. The nucleophile active site attacks the C1' of nucleotide 34 to detach the guanine base from the RNA, forming a covalent enzyme-RNA intermediate. The proton acceptor active site deprotonates the incoming queuine, allowing a nucleophilic attack on the C1' of the ribose to form the product. This Caenorhabditis briggsae protein is Queuine tRNA-ribosyltransferase catalytic subunit.